The sequence spans 699 residues: DnaJ homolog subfamily C member 14 (699 aa).

Residues 1 to 230 are disordered; that stretch reads MAQKHPGEGG…RHRLGRKRSQ (230 aa). A compositionally biased stretch (pro residues) spans 75 to 84; it reads HGPPRGPGPP. The span at 86–102 shows a compositional bias: acidic residues; it reads AEEDPDQSEASSEESGV. The span at 117 to 133 shows a compositional bias: polar residues; sequence DGNSSFLSIPSTCNCQG. The segment covering 163–176 has biased composition (acidic residues); the sequence is GEDEELEGEYDEEE. A compositionally biased stretch (basic and acidic residues) spans 203–218; it reads PAKEDTREGGRRDPRS. The span at 219 to 228 shows a compositional bias: basic residues; it reads PGRHRLGRKR. 3 consecutive transmembrane segments (helical) span residues 251 to 271, 301 to 321, and 327 to 347; these read AGFW…ETCG, GWAQ…AGLF, and LVGA…QLGW. In terms of domain architecture, J spans 444 to 508; it reads NPFHVLGVEA…ERRKEYEMKR (65 aa). Residues 655–699 form a disordered region; the sequence is MSNGNFFAAPQPGPGATAASKPNSTVPKGEAKPKRRKKVRRPFQR. Low complexity predominate over residues 662 to 673; that stretch reads AAPQPGPGATAA. A compositionally biased stretch (basic residues) spans 687–699; the sequence is PKRRKKVRRPFQR.

As to quaternary structure, interacts with the FxxxFxxxF motif of DRD1 via its C-terminal domain. Interacts with pestivirus nonstructural protein NS2.

The protein resides in the endoplasmic reticulum membrane. Its function is as follows. Regulates the export of target proteins, such as DRD1, from the endoplasmic reticulum to the cell surface. Promotes cleavage of pestivirus polyprotein. The chain is DnaJ homolog subfamily C member 14 (DNAJC14) from Bos taurus (Bovine).